We begin with the raw amino-acid sequence, 484 residues long: uncharacterized protein (484 aa).

The span at 1–14 shows a compositional bias: low complexity; the sequence is MIDSTSTATATSKT. The segment at 1–32 is disordered; that stretch reads MIDSTSTATATSKTVELNTNGSKTDASSENGT. Over residues 15–32 the composition is skewed to polar residues; it reads VELNTNGSKTDASSENGT. Residue lysine 305 is modified to N6-(pyridoxal phosphate)lysine.

It belongs to the class-III pyridoxal-phosphate-dependent aminotransferase family. The cofactor is pyridoxal 5'-phosphate.

This is an uncharacterized protein from Schizosaccharomyces pombe (strain 972 / ATCC 24843) (Fission yeast).